The chain runs to 498 residues: L-amino acid oxidase Bs29 (498 aa).

The N-terminal stretch at 1 to 3 is a signal peptide; that stretch reads SCA. Cys-12 and Cys-175 are oxidised to a cystine. Residues 45 to 46, 65 to 66, Arg-73, and 89 to 92 each bind FAD; these read MS, EA, and GPMR. Arg-92 is a binding site for substrate. Asn-174 is a glycosylation site (N-linked (GlcNAc...) asparagine). Substrate is bound at residue His-225. Val-263 provides a ligand contact to FAD. Cysteines 333 and 414 form a disulfide. Tyr-374 contacts substrate. FAD contacts are provided by residues Glu-459 and 466 to 471; that span reads GWIDST. 466–467 is a substrate binding site; that stretch reads GW.

It belongs to the flavin monoamine oxidase family. FIG1 subfamily. As to quaternary structure, monomer. This is in contrast with most of its orthologs, that are non-covalently linked homodimers. It depends on FAD as a cofactor. Expressed by the venom gland.

It is found in the secreted. It carries out the reaction an L-alpha-amino acid + O2 + H2O = a 2-oxocarboxylate + H2O2 + NH4(+). The catalysed reaction is L-leucine + O2 + H2O = 4-methyl-2-oxopentanoate + H2O2 + NH4(+). In terms of biological role, catalyzes an oxidative deamination of predominantly hydrophobic and aromatic L-amino acids, thus producing hydrogen peroxide that may contribute to the diverse toxic effects of this enzyme. Shows activity on L-Leu. Damage cell membranes of the Gram-positive bacteria S.aureus (MIC=4 ug/ml and MBC=8 ug/ml) and the Gram-negative bacteria A.baumanni (MIC=2 ug/ml and MBC=4 ug/ml). This antibacterial activity is dependent on the production of hydrogen peroxyde, since it is inhibited by catalase, a hydrogen peroxyde scavenger. This Bothriechis schlegelii (Eyelash palm pitviper) protein is L-amino acid oxidase Bs29.